Here is a 381-residue protein sequence, read N- to C-terminus: tRNA (guanine(26)-N(2))-dimethyltransferase (381 aa).

The 372-residue stretch at 7–378 folds into the Trm1 methyltransferase domain; the sequence is IEVQEGKAKI…APYEVFIETI (372 aa). Residues Arg39, Arg64, Asp81, Asp123, and Ala124 each coordinate S-adenosyl-L-methionine.

This sequence belongs to the class I-like SAM-binding methyltransferase superfamily. Trm1 family.

It catalyses the reaction guanosine(26) in tRNA + 2 S-adenosyl-L-methionine = N(2)-dimethylguanosine(26) in tRNA + 2 S-adenosyl-L-homocysteine + 2 H(+). Its function is as follows. Dimethylates a single guanine residue at position 26 of a number of tRNAs using S-adenosyl-L-methionine as donor of the methyl groups. This is tRNA (guanine(26)-N(2))-dimethyltransferase from Pyrococcus horikoshii (strain ATCC 700860 / DSM 12428 / JCM 9974 / NBRC 100139 / OT-3).